Reading from the N-terminus, the 344-residue chain is Cyclin-G2 (344 aa).

Residues 298 to 324 (CFDGSESEDSGEDMSCGEESLSSSPPS) are disordered. Residues 302-313 (SESEDSGEDMSC) show a composition bias toward acidic residues.

This sequence belongs to the cyclin family. Cyclin G subfamily. Highest levels in intestine. Intermediate levels in spleen, brain and kidney. Low levels in testis, stomach, pancreas, liver, salivary gland and muscle. According to PubMed:9139721 also abundant in thymus.

The protein resides in the cytoplasm. Its subcellular location is the nucleus. Functionally, may play a role in growth regulation and in negative regulation of cell cycle progression. The protein is Cyclin-G2 (Ccng2) of Mus musculus (Mouse).